Consider the following 490-residue polypeptide: 5'-3' exonuclease PLD3 (490 aa).

The Cytoplasmic portion of the chain corresponds to 1–38 (MKPKLMYQELKVPAEEPANELPMNEIEAWKAAEKKARW). A helical; Signal-anchor for type II membrane protein membrane pass occupies residues 39–59 (VLLVLILAVVGFGALMTQLFL). Residues 60 to 490 (WEYGDLHLFG…DSVGNACRLL (431 aa)) lie on the Lumenal side of the membrane. 2 cysteine pairs are disulfide-bonded: cysteine 77–cysteine 239 and cysteine 81–cysteine 237. N-linked (GlcNAc...) asparagine glycans are attached at residues asparagine 97 and asparagine 132. A PLD phosphodiesterase 1 domain is found at 196 to 223 (THGVLHTKFWVVDQTHFYLGSANMDWRS). Catalysis depends on residues histidine 201, lysine 203, and aspartate 208. Catalysis depends on histidine 201, which acts as the Proton donor. Phosphate is bound by residues histidine 201 and lysine 203. Asparagine 218 contacts phosphate. 3 N-linked (GlcNAc...) asparagine glycosylation sites follow: asparagine 236, asparagine 284, and asparagine 387. Cysteine 366 and cysteine 487 are joined by a disulfide. The 27-residue stretch at 411–437 (YARVNHNKYMVTERATYIGTSNWSGNY) folds into the PLD phosphodiesterase 2 domain. Residue histidine 416 participates in phosphate binding. Histidine 416 serves as the catalytic Nucleophile. Phenylalanine 438 contacts Mg(2+).

The protein belongs to the phospholipase D family. As to quaternary structure, homodimer. Interacts with APP. Post-translationally, N-glycosylated. In terms of processing, proteolytically processed to a soluble form that is stable within endosomes and lysosomes. During transport through the secretory pathway becomes proteolysed by cysteine proteases, thereby releasing a stable soluble lysosomal lumenal polypeptide, whereas the transmembrane-bound fragment is rapidly degraded. Its transport route to lysosomes involves ubiquitination and the ESCRT complex. Ubiquitinated. Ubiquitination mediates sorting into lysosomes.

It localises to the endoplasmic reticulum membrane. It is found in the lysosome lumen. The protein resides in the early endosome membrane. The protein localises to the late endosome membrane. Its subcellular location is the golgi apparatus membrane. It localises to the endosome membrane. The catalysed reaction is Exonucleolytic cleavage in the 5'- to 3'-direction to yield nucleoside 3'-phosphates.. The enzyme catalyses a 5'-end 5'-dephospho-ribonucleotidyl-ribonucleotide-RNA + H2O = a ribonucleoside 3'-phosphate + a 5'-end dephospho-ribonucleoside-RNA + H(+). It carries out the reaction a ribonucleoside 3'-phosphate-2'-3'-cyclophospho-GMP + H2O = a ribonucleoside 3'-phosphate + 2',3'-cyclophospho-GMP + H(+). It catalyses the reaction a 5'-end 5'-dephospho-2'-deoxyribonucleotidyl-2'-deoxyribonucleotide in single-stranded DNA + H2O = a 5'-end dephospho-2'-deoxyribonucleoside in single-stranded DNA + a 2'-deoxyribonucleoside 3'-phosphate + H(+). The catalysed reaction is a 5'-end 5'-phospho-2'-deoxyribonucleotide in single-stranded DNA + H2O = a 5'-end 5'-dephospho-2'-deoxyribonucleotide in single-stranded DNA + phosphate. The enzyme catalyses a 3-lyso-sn-glycero-1-phospho-(3'-acyl-1'-sn-glycerol) + a 1-acyl-sn-glycerol = a 3-acyl-sn-glycero-1-phospho-(3'-acyl-1'-sn-glycerol) + glycerol. It carries out the reaction 3-lyso-sn-glycero-1-phospho-(3'-(9Z-octadecenoyl)-1'-sn-glycerol) + 1-(9Z-octadecenoyl)-sn-glycerol = 3-(9Z-octadecenoyl)-sn-glycero-1-phospho-(3'-(9Z-octadecenoyl)-1'-sn-glycerol) + glycerol. In terms of biological role, 5'-&gt;3' exonuclease that hydrolyzes the phosphodiester bond of single-stranded DNA (ssDNA) and RNA molecules to form nucleoside 3'-monophosphates and 5'-end 5'-hydroxy deoxyribonucleotide/ribonucleotide fragments. Partially redundant with PLD4, can cleave all four nucleotides displaying higher efficiency for ssDNA and RNA fragments initiated with uridine and guanosine residues and lower efficiency for cytidine-initiated substrates. As a result, it does not always degrade polynucleotides to the single nucleotide level, it can stall at specific sites sparing certain fragments from exonucleolytic degradation. Processes self and pathogenic ssDNA and RNA molecules that reach the endolysosomal compartment via phagocytosis or autophagy and may serve as 'danger' signals for recognition by innate immune receptors such as toll-like receptors (TLRs). Degrades mitochondrial CpG-rich ssDNA fragments to prevent TLR9 activation and autoinflammatory response, but it can cleave viral RNA to generate ligands for TLR7 activation and initiate antiviral immune responses. In plasmacytoid dendritic cells, it cooperates with endonuclease RNASET2 to release 2',3'-cyclic guanosine monophosphate (2',3'-cGMP), a potent stimulatory ligand for TLR7. Produces 2',3'-cGMPs and cytidine-rich RNA fragments that occupy TLR7 ligand-binding pockets and trigger a signaling-competent state. Can exert polynucleotide phosphatase activity toward 5'-phosphorylated ssDNA substrates although at a slow rate. Transphosphatidylase that catalyzes the exchange with R to S stereo-inversion of the glycerol moiety between (S,R)-lysophosphatidylglycerol (LPG) and monoacylglycerol (MAG) substrates to yield (S,S)-bis(monoacylglycero)phosphate (BMP). Can synthesize a variety of (S,S)-BMPs representing the main phospholipid constituent of lysosomal intralumenal vesicle (ILV) membranes that bind acid hydrolases for lipid degradation. Regulates the homeostasis and interorganellar communication of the endolysosomal system with an overall impact on cellular removal of dysfunctional organelles via autophagy as well as proper protein and lipid turnover. May play a role in myotube formation in response to ER stress. This is 5'-3' exonuclease PLD3 (PLD3) from Pongo abelii (Sumatran orangutan).